Here is a 262-residue protein sequence, read N- to C-terminus: Malonyl-[acyl-carrier protein] O-methyltransferase (262 aa).

Belongs to the methyltransferase superfamily.

The enzyme catalyses malonyl-[ACP] + S-adenosyl-L-methionine = malonyl-[ACP] methyl ester + S-adenosyl-L-homocysteine. Its pathway is cofactor biosynthesis; biotin biosynthesis. In terms of biological role, converts the free carboxyl group of a malonyl-thioester to its methyl ester by transfer of a methyl group from S-adenosyl-L-methionine (SAM). It allows to synthesize pimeloyl-ACP via the fatty acid synthetic pathway. This is Malonyl-[acyl-carrier protein] O-methyltransferase from Erwinia pyrifoliae (strain DSM 12163 / CIP 106111 / Ep16/96).